A 447-amino-acid chain; its full sequence is MTKPVASYELDEKRFLTLLGKLIGETENLQNRPPALIPIEDNAGRHVIEALTPYLKANGGVLELEQVHCDPVNYPKRGNIIIEYPGTSKGTSSPKTISFVGSHLDVVPADKTAWDRNPFQLIIEGDKLYGRGTTDCLGHVALLTDLFIQLATEKPALKHSIFAVFIVSEENDEIPGIGVDALDHSGKMNPCKNGPVYWVDSADSQPTIGTGGAQTWNLTAHGKNMHSAMPYRTVNSVELVNEALAEIQRRFYIDFKPHPKEAEYKFDCSSTMKPTLWKPIAGSYNTIPGESTICGDIRLTPFYDMKEMRAKVEGYIKDINANITELRNRGPYSKYDVPASEGVEPVKGSVSIEWLGEASAGVACKLDSDGYKALGKATSEILGSLTPVATCGTLPLVRDLQDSGFDIQITGFGKEETYHADNEYALLSDFKNAIKILSRTIDLLEKN.

Residue His103 coordinates Zn(2+). Asp105 is a catalytic residue. Zn(2+) is bound at residue Asp135. The active-site Proton acceptor is Glu169. Zn(2+) is bound by residues Glu170 and His419.

The protein belongs to the peptidase M20A family. ArgE subfamily. In terms of assembly, homodimer. Zn(2+) serves as cofactor. Co(2+) is required as a cofactor.

The catalysed reaction is N(2)-acetyl-L-ornithine + H2O = L-ornithine + acetate. The protein operates within amino-acid biosynthesis; L-arginine biosynthesis; L-ornithine from N(2)-acetyl-L-ornithine (linear): step 1/1. The sequence is that of Acetylornithine deacetylase (argE) from Dictyostelium discoideum (Social amoeba).